We begin with the raw amino-acid sequence, 204 residues long: Outer-membrane lipoprotein carrier protein (204 aa).

The N-terminal stretch at 1 to 21 (MKKYLNLTALLLVGISNVTWA) is a signal peptide.

It belongs to the LolA family. In terms of assembly, monomer.

It localises to the periplasm. In terms of biological role, participates in the translocation of lipoproteins from the inner membrane to the outer membrane. Only forms a complex with a lipoprotein if the residue after the N-terminal Cys is not an aspartate (The Asp acts as a targeting signal to indicate that the lipoprotein should stay in the inner membrane). The chain is Outer-membrane lipoprotein carrier protein from Histophilus somni (strain 2336) (Haemophilus somnus).